The sequence spans 238 residues: Ribosomal RNA small subunit methyltransferase G (238 aa).

S-adenosyl-L-methionine contacts are provided by residues Gly-77, Phe-82, 128-129, and Arg-147; that span reads AE. The disordered stretch occupies residues 219-238; the sequence is RQTPKKYPRKAGLPNKEPIE.

This sequence belongs to the methyltransferase superfamily. RNA methyltransferase RsmG family.

The protein localises to the cytoplasm. Functionally, specifically methylates the N7 position of guanine in position 535 of 16S rRNA. In Oceanobacillus iheyensis (strain DSM 14371 / CIP 107618 / JCM 11309 / KCTC 3954 / HTE831), this protein is Ribosomal RNA small subunit methyltransferase G.